Consider the following 398-residue polypeptide: Bifunctional enzyme IspD/IspF (398 aa).

The tract at residues 1-234 (MPSSKRTAAI…ARLAAALGDI (234 aa)) is 2-C-methyl-D-erythritol 4-phosphate cytidylyltransferase. A 2-C-methyl-D-erythritol 2,4-cyclodiphosphate synthase region spans residues 235 to 398 (RTGTGYDVHA…LPWNDKGRDT (164 aa)). D241 and H243 together coordinate a divalent metal cation. Residues 241-243 (DVH) and 267-268 (HS) each bind 4-CDP-2-C-methyl-D-erythritol 2-phosphate. H275 serves as a coordination point for a divalent metal cation. Residues 289 to 291 (DIG), 365 to 368 (TTSE), F372, and R375 each bind 4-CDP-2-C-methyl-D-erythritol 2-phosphate.

It in the N-terminal section; belongs to the IspD/TarI cytidylyltransferase family. IspD subfamily. This sequence in the C-terminal section; belongs to the IspF family. Requires a divalent metal cation as cofactor.

It catalyses the reaction 2-C-methyl-D-erythritol 4-phosphate + CTP + H(+) = 4-CDP-2-C-methyl-D-erythritol + diphosphate. The enzyme catalyses 4-CDP-2-C-methyl-D-erythritol 2-phosphate = 2-C-methyl-D-erythritol 2,4-cyclic diphosphate + CMP. It functions in the pathway isoprenoid biosynthesis; isopentenyl diphosphate biosynthesis via DXP pathway; isopentenyl diphosphate from 1-deoxy-D-xylulose 5-phosphate: step 2/6. It participates in isoprenoid biosynthesis; isopentenyl diphosphate biosynthesis via DXP pathway; isopentenyl diphosphate from 1-deoxy-D-xylulose 5-phosphate: step 4/6. In terms of biological role, bifunctional enzyme that catalyzes the formation of 4-diphosphocytidyl-2-C-methyl-D-erythritol from CTP and 2-C-methyl-D-erythritol 4-phosphate (MEP) (IspD), and catalyzes the conversion of 4-diphosphocytidyl-2-C-methyl-D-erythritol 2-phosphate (CDP-ME2P) to 2-C-methyl-D-erythritol 2,4-cyclodiphosphate (ME-CPP) with a corresponding release of cytidine 5-monophosphate (CMP) (IspF). The protein is Bifunctional enzyme IspD/IspF of Nitrobacter winogradskyi (strain ATCC 25391 / DSM 10237 / CIP 104748 / NCIMB 11846 / Nb-255).